We begin with the raw amino-acid sequence, 144 residues long: Hemoglobin subunit alpha-1 (144 aa).

An N-acetylserine modification is found at Ser-1. The region spanning 1–144 is the Globin domain; that stretch reads SLTAKDKSVV…VSAALADKYR (144 aa). His-61 lines the O2 pocket. His-90 is a binding site for heme b.

It belongs to the globin family. In terms of assembly, heterotetramer of two alpha chains and two beta chains. In terms of tissue distribution, red blood cells.

In terms of biological role, involved in oxygen transport from gills to the various peripheral tissues. The polypeptide is Hemoglobin subunit alpha-1 (hba1) (Oncorhynchus mykiss (Rainbow trout)).